We begin with the raw amino-acid sequence, 251 residues long: Developmental protein SEPALLATA 1 (251 aa).

Positions 3–57 constitute an MADS-box domain; the sequence is RGRVELKRIENKINRQVTFAKRRNGLLKKAYELSVLCDAEVALIIFSNRGKLYEF. The stretch at 85–176 forms a coiled coil; that stretch reads AKELENSYRE…ALAMKLDDMI (92 aa). Residues 88 to 178 enclose the K-box domain; sequence LENSYREYLK…AMKLDDMIGV (91 aa).

In terms of assembly, heterodimer with AGAMOUS capable of binding to CArG-box sequences. Interacts with AGL16. Interacts with TT16/AGL32. In terms of tissue distribution, expressed mainly in carpels, and weakly in stamens.

The protein resides in the nucleus. Probable transcription factor. Functions with SEPALLATA2/AGL4 and SEPALLATA3/AGL9 to ensure proper development of petals, stamens and carpels, and to prevent the indeterminate growth of the flower meristem. Forms a heterodimer via the K-box domain with AGAMOUS, that could be involved in genes regulation during floral meristem development. The sequence is that of Developmental protein SEPALLATA 1 (SEP1) from Arabidopsis thaliana (Mouse-ear cress).